The following is a 413-amino-acid chain: Chloramphenicol efflux pump Rv0191 (413 aa).

Transmembrane regions (helical) follow at residues 23–43, 55–75, 89–109, 110–130, 150–170, 176–196, 226–246, 256–276, 286–306, 312–332, 353–373, and 378–398; these read LSVL…PVGA, VVLV…TTVP, LVVS…APNF, AVLA…WAVI, IYIG…AMSL, LAAV…RLAL, VLTM…VVII, NLAW…PLVA, AVIV…ALAF, AATA…ATAV, GLYV…GGLL, and LAMM…GMTV.

It belongs to the major facilitator superfamily.

Its subcellular location is the cell membrane. Its activity is regulated as follows. Inhibited by the drug efflux pump inhibitors verapamil, resperine, piperine, chlorpromazine and carbonyl cyanide m-chlorophenylhydrazone (CCCP). Its function is as follows. Active efflux pump that plays an important role in chloramphenicol resistance. Overexpression causes pyrazinamide resistance. The chain is Chloramphenicol efflux pump Rv0191 from Mycobacterium tuberculosis (strain ATCC 25618 / H37Rv).